The chain runs to 209 residues: Small ribosomal subunit protein uS3 (209 aa).

Residues 38 to 107 (IRKFIKNRYY…RVVINIEEIK (70 aa)) form the KH type-2 domain.

This sequence belongs to the universal ribosomal protein uS3 family. Part of the 30S ribosomal subunit. Forms a tight complex with proteins S10 and S14.

Its function is as follows. Binds the lower part of the 30S subunit head. Binds mRNA in the 70S ribosome, positioning it for translation. In Thermotoga petrophila (strain ATCC BAA-488 / DSM 13995 / JCM 10881 / RKU-1), this protein is Small ribosomal subunit protein uS3.